A 717-amino-acid polypeptide reads, in one-letter code: MFETHKVEIEWAGRPLKLETGKIARQADGAVLATYGETVVLATVVSAKAPKPGQDFFPLTVNYQEKTYAAGKIPGGYFKREGRPSENETLVSRLIDRPIRPLFPDGYKNDTQVIITVMQHDLENNPDVVAMVAASAALTLSGVPFMGPVGGARVGYINGEYVLNPHLDEMDESTLDLVVAGTQEAVLMVESEAKELPEDVMLGAVVFGQKGFQPVIDAVIRLAEVAAKEPREFNPEDHSALENAMLSIAEDELRNAYKITEKAARYAAVDAVKAKVKEHFLPEGVENPAHTAEEIAAVFKHLQAKIVRWNILDTKSRIDGRDLVTVRPIVAEVGILPRTHGSALFTRGETQAIVVATLGTGEDEQYVDSLTGMYKENFMLHYNFPPYSVGETGRMGSPGRREIGHGKLAWRAIHPMLPTAEQFPYTLRVVSEITESNGSSSMATVCGTSLALMDAGVPLAKPVAGIAMGLIKEDDRFAVLSDILGDEDHLGDMDFKVAGTDAGITSLQMDIKIEGITEEIMGVALNQAKGGRLHILGEMAKAISESRGQLGEFAPRIEVMNIPVDKIREVIGSGGKVIREIVEKTGAKINIDDDGTVKIASASAKEIEAARKWIHSIVAEPEVGQVYEGTVVKTADFGAFVNFFGARDGLVHISQLASERVAKTTDVVKEGDKVWVKLMGFDERGKVRLSMKVVDQATGKEVVAEKSEKKDGGEAAE.

Mg(2+) contacts are provided by D488 and D494. One can recognise a KH domain in the interval 555–614 (PRIEVMNIPVDKIREVIGSGGKVIREIVEKTGAKINIDDDGTVKIASASAKEIEAARKWI). An S1 motif domain is found at 624–692 (GQVYEGTVVK…ERGKVRLSMK (69 aa)).

It belongs to the polyribonucleotide nucleotidyltransferase family. Requires Mg(2+) as cofactor.

It localises to the cytoplasm. It carries out the reaction RNA(n+1) + phosphate = RNA(n) + a ribonucleoside 5'-diphosphate. Its function is as follows. Involved in mRNA degradation. Catalyzes the phosphorolysis of single-stranded polyribonucleotides processively in the 3'- to 5'-direction. In Rhizobium meliloti (strain 1021) (Ensifer meliloti), this protein is Polyribonucleotide nucleotidyltransferase.